A 651-amino-acid polypeptide reads, in one-letter code: Beta-glucuronidase (651 aa).

A signal peptide spans 1–22 (MLRGPAAVWAALGPLLWACGLA). N-linked (GlcNAc...) asparagine glycans are attached at residues asparagine 172 and asparagine 419. Residue glutamate 450 is the Proton donor of the active site. Residue asparagine 630 is glycosylated (N-linked (GlcNAc...) asparagine).

It belongs to the glycosyl hydrolase 2 family. In terms of assembly, homotetramer.

Its subcellular location is the lysosome. It catalyses the reaction a beta-D-glucuronoside + H2O = D-glucuronate + an alcohol. Its activity is regulated as follows. Inhibited by L-aspartic acid. Functionally, plays an important role in the degradation of dermatan and keratan sulfates. In Felis catus (Cat), this protein is Beta-glucuronidase (GUSB).